A 231-amino-acid polypeptide reads, in one-letter code: Phosphatidylserine decarboxylase proenzyme (231 aa).

The active-site Schiff-base intermediate with substrate; via pyruvic acid is Ser188. A Pyruvic acid (Ser); by autocatalysis modification is found at Ser188.

This sequence belongs to the phosphatidylserine decarboxylase family. PSD-A subfamily. Heterodimer of a large membrane-associated beta subunit and a small pyruvoyl-containing alpha subunit. The cofactor is pyruvate. In terms of processing, is synthesized initially as an inactive proenzyme. Formation of the active enzyme involves a self-maturation process in which the active site pyruvoyl group is generated from an internal serine residue via an autocatalytic post-translational modification. Two non-identical subunits are generated from the proenzyme in this reaction, and the pyruvate is formed at the N-terminus of the alpha chain, which is derived from the carboxyl end of the proenzyme. The post-translation cleavage follows an unusual pathway, termed non-hydrolytic serinolysis, in which the side chain hydroxyl group of the serine supplies its oxygen atom to form the C-terminus of the beta chain, while the remainder of the serine residue undergoes an oxidative deamination to produce ammonia and the pyruvoyl prosthetic group on the alpha chain.

Its subcellular location is the cell membrane. The catalysed reaction is a 1,2-diacyl-sn-glycero-3-phospho-L-serine + H(+) = a 1,2-diacyl-sn-glycero-3-phosphoethanolamine + CO2. Its pathway is phospholipid metabolism; phosphatidylethanolamine biosynthesis; phosphatidylethanolamine from CDP-diacylglycerol: step 2/2. In terms of biological role, catalyzes the formation of phosphatidylethanolamine (PtdEtn) from phosphatidylserine (PtdSer). This Rickettsia peacockii (strain Rustic) protein is Phosphatidylserine decarboxylase proenzyme.